The chain runs to 571 residues: Urease subunit alpha (571 aa).

The Urease domain occupies 132-571; sequence GGIDSHIHFI…LPMAQRYFLF (440 aa). Ni(2+) is bound by residues His-137, His-139, and Lys-220. An N6-carboxylysine modification is found at Lys-220. A substrate-binding site is contributed by His-222. Residues His-249 and His-275 each coordinate Ni(2+). His-323 (proton donor) is an active-site residue. Ni(2+) is bound at residue Asp-363.

The protein belongs to the metallo-dependent hydrolases superfamily. Urease alpha subunit family. Heterotrimer of UreA (gamma), UreB (beta) and UreC (alpha) subunits. Three heterotrimers associate to form the active enzyme. Ni cation is required as a cofactor. In terms of processing, carboxylation allows a single lysine to coordinate two nickel ions.

Its subcellular location is the cytoplasm. It carries out the reaction urea + 2 H2O + H(+) = hydrogencarbonate + 2 NH4(+). The protein operates within nitrogen metabolism; urea degradation; CO(2) and NH(3) from urea (urease route): step 1/1. This Kocuria rhizophila (strain ATCC 9341 / DSM 348 / NBRC 103217 / DC2201) protein is Urease subunit alpha.